We begin with the raw amino-acid sequence, 303 residues long: Phosphoglycerate mutase 3 (303 aa).

Residues 13–20, 26–27, R70, 120–123, K131, and 147–148 contribute to the substrate site; these read RHGQSELN, CG, ERHY, and RR. H14 serves as the catalytic Tele-phosphohistidine intermediate. The Proton donor/acceptor role is filled by E120. Residues 168–198 form a disordered region; that stretch reads NDQGSSTGYDFKEPNRHLKYGPEEKANERLP. Residues 177–198 show a composition bias toward basic and acidic residues; sequence DFKEPNRHLKYGPEEKANERLP. Residue 236–237 participates in substrate binding; that stretch reads GS.

Belongs to the phosphoglycerate mutase family. BPG-dependent PGAM subfamily.

It catalyses the reaction (2R)-2-phosphoglycerate = (2R)-3-phosphoglycerate. It participates in carbohydrate degradation; glycolysis; pyruvate from D-glyceraldehyde 3-phosphate: step 3/5. In terms of biological role, could be non-functional. This is Phosphoglycerate mutase 3 (GPM3) from Saccharomyces cerevisiae (strain ATCC 204508 / S288c) (Baker's yeast).